Reading from the N-terminus, the 224-residue chain is Synaptogyrin-2 (224 aa).

Methionine 1 is modified (N-acetylmethionine). Position 3 is a phosphoserine (serine 3). The MARVEL domain occupies 20–171 (FLTQPQVVAR…LASLAYQRYK (152 aa)). 4 consecutive transmembrane segments (helical) span residues 26–46 (VVAR…IYGE), 73–93 (AIGV…AYFP), 105–125 (VIGD…GFCF), and 147–167 (AAIT…SLAY).

The protein belongs to the synaptogyrin family. As to quaternary structure, (Microbial infection) Interacts with SFTS phlebovirus protein NSs; may be involved in virus replication. Post-translationally, may be tyrosine phosphorylated by Src. Ubiquitous; low expression in brain.

The protein localises to the cytoplasmic vesicle membrane. Its subcellular location is the cytoplasmic vesicle. It is found in the secretory vesicle. The protein resides in the synaptic vesicle membrane. It localises to the lipid droplet. Its function is as follows. May play a role in regulated exocytosis. In neuronal cells, modulates the localization of synaptophysin/SYP into synaptic-like microvesicles and may therefore play a role in the formation and/or the maturation of this vesicles. May also play a role in GLUT4 storage and transport to the plasma membrane. In terms of biological role, (Microbial infection) May play a role in the assembly of cytoplasmic inclusion bodies required for SFTS phlebovirus replication. In Homo sapiens (Human), this protein is Synaptogyrin-2.